Consider the following 321-residue polypeptide: Putative zinc finger CCCH domain-containing protein 9 (321 aa).

Disordered stretches follow at residues 1-59 (MADA…PGKK) and 181-269 (REAE…NLQE). Over residues 10-29 (EAERRSDETESRSIKEPKEK) the composition is skewed to basic and acidic residues. Residues 55–83 (RPGKKDCQFYLKNGLCRYRSSCRFNHPTQ) form a C3H1-type zinc finger. The stretch at 164 to 290 (TEWRFERERM…EARLRLEQIR (127 aa)) forms a coiled coil. Composition is skewed to basic and acidic residues over residues 181 to 224 (REAE…REAQ) and 231 to 244 (RQRD…REAQ).

This Arabidopsis thaliana (Mouse-ear cress) protein is Putative zinc finger CCCH domain-containing protein 9.